Consider the following 217-residue polypeptide: Adenylate kinase (217 aa).

10 to 15 (GAGKGT) contacts ATP. The tract at residues 30-59 (STGDMLRAAVKAGTPLGLQAKDIMASGGLV) is NMP. Residues Thr-31, Arg-36, 57 to 59 (GLV), 85 to 88 (GFPR), and Gln-92 each bind AMP. Positions 122-159 (GRRVHEASGRVYHIIHNAPRVEGHDDVTGEPLVQRPDD) are LID. ATP contacts are provided by residues Arg-123 and 132–133 (VY). Residues Arg-156 and Arg-167 each coordinate AMP. Gly-203 contributes to the ATP binding site.

It belongs to the adenylate kinase family. Monomer.

It localises to the cytoplasm. It catalyses the reaction AMP + ATP = 2 ADP. It participates in purine metabolism; AMP biosynthesis via salvage pathway; AMP from ADP: step 1/1. Catalyzes the reversible transfer of the terminal phosphate group between ATP and AMP. Plays an important role in cellular energy homeostasis and in adenine nucleotide metabolism. The sequence is that of Adenylate kinase from Cellvibrio japonicus (strain Ueda107) (Pseudomonas fluorescens subsp. cellulosa).